The primary structure comprises 344 residues: Anamorsin homolog 1 (344 aa).

The interval 1 to 169 (MANNVGVLLA…DTGSVFQIRK (169 aa)) is N-terminal SAM-like domain. The tract at residues 170–233 (KVSNQNGNFR…EDDLLTEEDL (64 aa)) is linker. The [2Fe-2S] cluster site is built by Cys244, Cys251, Cys254, and Cys256. The interval 244-256 (CAPTKKACKNCTC) is fe-S binding site A. Positions 282, 285, 293, and 296 each coordinate [4Fe-4S] cluster. Short sequence motifs (cx2C motif) lie at residues 282 to 285 (CGSC) and 293 to 296 (CAGC). The fe-S binding site B stretch occupies residues 282 to 296 (CGSCGLGDAFRCAGC).

The protein belongs to the anamorsin family. Monomer. [2Fe-2S] cluster is required as a cofactor. It depends on [4Fe-4S] cluster as a cofactor.

It is found in the cytoplasm. The protein localises to the mitochondrion intermembrane space. In terms of biological role, component of the cytosolic iron-sulfur (Fe-S) protein assembly (CIA) machinery. Required for the maturation of extramitochondrial Fe-S proteins. Part of an electron transfer chain functioning in an early step of cytosolic Fe-S biogenesis, facilitating the de novo assembly of a [4Fe-4S] cluster on the cytosolic Fe-S scaffold complex. Electrons are transferred from NADPH via a FAD- and FMN-containing diflavin oxidoreductase. Together with the diflavin oxidoreductase, also required for the assembly of the diferric tyrosyl radical cofactor of ribonucleotide reductase (RNR), probably by providing electrons for reduction during radical cofactor maturation in the catalytic small subunit. The polypeptide is Anamorsin homolog 1 (Physcomitrium patens (Spreading-leaved earth moss)).